Reading from the N-terminus, the 467-residue chain is Asparagine--tRNA ligase (467 aa).

This sequence belongs to the class-II aminoacyl-tRNA synthetase family. As to quaternary structure, homodimer.

The protein localises to the cytoplasm. The catalysed reaction is tRNA(Asn) + L-asparagine + ATP = L-asparaginyl-tRNA(Asn) + AMP + diphosphate + H(+). The sequence is that of Asparagine--tRNA ligase from Protochlamydia amoebophila (strain UWE25).